The following is a 314-amino-acid chain: Palmitoyl-protein thioesterase 1 (314 aa).

The first 25 residues, 1 to 25 (MISICCSRFSCILFLLFLIFSLVLS), serve as a signal peptide directing secretion. 3 cysteine pairs are disulfide-bonded: cysteine 53/cysteine 54, cysteine 104/cysteine 136, and cysteine 160/cysteine 168. The Nucleophile role is filled by serine 123. N-linked (GlcNAc...) asparagine glycosylation is present at asparagine 240. Active-site residues include aspartate 241 and histidine 295.

It belongs to the palmitoyl-protein thioesterase family. In terms of tissue distribution, ubiquitously expressed.

Its subcellular location is the lysosome. The catalysed reaction is S-hexadecanoyl-L-cysteinyl-[protein] + H2O = L-cysteinyl-[protein] + hexadecanoate + H(+). Functionally, cleaves thioester-linked long fatty acyl groups such as palmitate from modified cysteine residues in proteins or peptides. In Drosophila melanogaster (Fruit fly), this protein is Palmitoyl-protein thioesterase 1 (Ppt1).